A 129-amino-acid polypeptide reads, in one-letter code: Small ribosomal subunit protein uS11 (129 aa).

The protein belongs to the universal ribosomal protein uS11 family. As to quaternary structure, part of the 30S ribosomal subunit. Interacts with proteins S7 and S18. Binds to IF-3.

Located on the platform of the 30S subunit, it bridges several disparate RNA helices of the 16S rRNA. Forms part of the Shine-Dalgarno cleft in the 70S ribosome. The chain is Small ribosomal subunit protein uS11 from Idiomarina loihiensis (strain ATCC BAA-735 / DSM 15497 / L2-TR).